Consider the following 216-residue polypeptide: Adenylate kinase (216 aa).

10 to 15 (GAGKGT) is an ATP binding site. Residues 30–59 (STGDMFRAAMKAETEMGLQAKSFIDKGALV) form an NMP region. AMP contacts are provided by residues threonine 31, arginine 36, 57 to 59 (ALV), 85 to 88 (GFPR), and glutamine 92. Residues 126 to 163 (GRRICKECGATYHLEFNAPAKADVCDKCGGELYQRSDD) form an LID region. Residue arginine 127 participates in ATP binding. Residues cysteine 130 and cysteine 133 each coordinate Zn(2+). 136–137 (TY) is a binding site for ATP. Residues cysteine 150 and cysteine 153 each coordinate Zn(2+). Residues arginine 160 and arginine 171 each coordinate AMP. Glutamine 199 is a binding site for ATP.

This sequence belongs to the adenylate kinase family. Monomer.

It localises to the cytoplasm. It carries out the reaction AMP + ATP = 2 ADP. It participates in purine metabolism; AMP biosynthesis via salvage pathway; AMP from ADP: step 1/1. Its function is as follows. Catalyzes the reversible transfer of the terminal phosphate group between ATP and AMP. Plays an important role in cellular energy homeostasis and in adenine nucleotide metabolism. In Bacillus anthracis (strain A0248), this protein is Adenylate kinase.